A 462-amino-acid chain; its full sequence is Argininosuccinate lyase (462 aa).

It belongs to the lyase 1 family. Argininosuccinate lyase subfamily.

The protein localises to the cytoplasm. The catalysed reaction is 2-(N(omega)-L-arginino)succinate = fumarate + L-arginine. The protein operates within amino-acid biosynthesis; L-arginine biosynthesis; L-arginine from L-ornithine and carbamoyl phosphate: step 3/3. The chain is Argininosuccinate lyase from Bacillus cereus (strain ATCC 10987 / NRS 248).